The following is a 169-amino-acid chain: DNA damage-inducible transcript 3 protein (169 aa).

Positions Phe-10 to Leu-18 are interaction with TRIB3. An N-terminal region spans residues Phe-10–Gln-26. Phosphoserine; by CK2 is present on residues Ser-14, Ser-15, Ser-30, and Ser-31. The segment at Asp-32–Glu-139 is disordered. The span at Thr-74–Ser-89 shows a compositional bias: low complexity. Phosphoserine; by MAPK14 occurs at positions 79 and 82. Residues Gln-99–Arg-162 form the bZIP domain. Residues Arg-101–Lys-130 form a basic motif region. A compositionally biased stretch (basic and acidic residues) spans Arg-119–Glu-139. Residues Leu-134 to Leu-148 are leucine-zipper.

It belongs to the bZIP family. Heterodimer. Interacts with TCF7L2/TCF4, EP300/P300, HDAC1, HDAC5 and HDAC6. Interacts with TRIB3 which blocks its association with EP300/P300. Interacts with FOXO3, CEBPB and ATF4. In terms of assembly, interacts with isoform AltDDIT3 of DDIT3. Post-translationally, ubiquitinated, leading to its degradation by the proteasome. In terms of processing, phosphorylation at serine residues by MAPK14 enhances its transcriptional activation activity while phosphorylation at serine residues by CK2 inhibits its transcriptional activation activity.

It is found in the cytoplasm. The protein localises to the nucleus. Functionally, multifunctional transcription factor in endoplasmic reticulum (ER) stress response. Plays an essential role in the response to a wide variety of cell stresses and induces cell cycle arrest and apoptosis in response to ER stress. Plays a dual role both as an inhibitor of CCAAT/enhancer-binding protein (C/EBP) function and as an activator of other genes. Acts as a dominant-negative regulator of C/EBP-induced transcription: dimerizes with members of the C/EBP family, impairs their association with C/EBP binding sites in the promoter regions, and inhibits the expression of C/EBP regulated genes. Positively regulates the transcription of TRIB3, IL6, IL8, IL23, TNFRSF10B/DR5, PPP1R15A/GADD34, BBC3/PUMA, BCL2L11/BIM and ERO1L. Negatively regulates; expression of BCL2 and MYOD1, ATF4-dependent transcriptional activation of asparagine synthetase (ASNS), CEBPA-dependent transcriptional activation of hepcidin (HAMP) and CEBPB-mediated expression of peroxisome proliferator-activated receptor gamma (PPARG). Together with ATF4, mediates ER-mediated cell death by promoting expression of genes involved in cellular amino acid metabolic processes, mRNA translation and the unfolded protein response (UPR) in response to ER stress. Inhibits the canonical Wnt signaling pathway by binding to TCF7L2/TCF4, impairing its DNA-binding properties and repressing its transcriptional activity. Plays a regulatory role in the inflammatory response through the induction of caspase-11 (CASP4/CASP11) which induces the activation of caspase-1 (CASP1) and both these caspases increase the activation of pro-IL1B to mature IL1B which is involved in the inflammatory response. Acts as a major regulator of postnatal neovascularization through regulation of endothelial nitric oxide synthase (NOS3)-related signaling. In Homo sapiens (Human), this protein is DNA damage-inducible transcript 3 protein (DDIT3).